A 476-amino-acid chain; its full sequence is Neuropeptide-like precursor 1 (476 aa).

Positions 1–34 (MNDAGASIGRHRGCLLLFVALAVAFSSYVEQVES) are cleaved as a signal peptide. Val-133 bears the Valine amide mark. 2 consecutive propeptides follow at residues 160 to 232 (DEAT…NSYF) and 259 to 476 (YVMP…RKNQ). Disordered regions lie at residues 275 to 298 (QNDI…DGEV) and 360 to 385 (PEVE…SHPT). The span at 286 to 297 (DDDDDDDDDDGE) shows a compositional bias: acidic residues.

As to expression, neuropeptide-like precursor 1-1: Expressed in antennal lobe (AL), corpora cardiaca (CC), corpora allata (CA) and gnathal ganglion (GNG) (at protein level). Expression in AL detected in all animals, in GNG in most animals, expression in CC and CA in few animals (at protein level). Neuropeptide-like precursor 1-2: Expressed in antennal lobe (AL), corpora cardiaca (CC), corpora allata (CA) and gnathal ganglion (GNG) (at protein level). Expression in AL detected in all animals, in GNG in some animals, expression in CC and CA in few animals (at protein level). Neuropeptide-like precursor 1-3: Not expressed in antennal lobe (AL), corpora cardiaca (CC), corpora allata (CA) and gnathal ganglion (GNG) (at protein level). Neuropeptide-like precursor 1-4: Expressed in antennal lobe (AL) and gnathal ganglion (GNG) (at protein level). Expression in AL detected in most animals, in GNG in some animals (at protein level). Not expressed in CC and CA (at protein level). YRVamide: Expressed in antennal lobe (AL), corpora cardiaca (CC), corpora allata (CA) and gnathal ganglion (GNG) (at protein level). Expression in AL and GNG detected in most animals, expression in CC and CA in few animals (at protein level). Extended YRVamide: Expressed in antennal lobe (AL) and gnathal ganglion (GNG) (at protein level). Expression in AL detected in most animals, in GNG in some animals (at protein level). Not expressed in corpora cardiaca (CC) and corpora allata (CA) (at protein level). Neuropeptide-like precursor 1-6: Expressed in antennal lobe (AL), corpora cardiaca (CC), corpora allata (CA) and gnathal ganglion (GNG) (at protein level). Expression in GNG detected in all animals, expression in AL in most animals, in CC and CA in few animals (at protein level). Neuropeptide-like precursor 1-6(1-11): Expressed in antennal lobe (AL) and gnathal ganglion (GNG) in most animals (at protein level). Not expressed in corpora cardiaca (CC) and corpora allata (CA) (at protein level). Neuropeptide-like precursor 1-9: Expressed in antennal lobe (AL) and gnathal ganglion (GNG) (at protein level). Expression in AL detected in all animals in GNG in most (at protein level). Not expressed in corpora cardiaca (CC) and corpora allata (CA) (at protein level).

The protein resides in the secreted. The protein is Neuropeptide-like precursor 1 of Agrotis ipsilon (Black cutworm moth).